The sequence spans 249 residues: MAGHSKWANTKHRKAKQDASRAKVFTKYIREIVTAAKLGGADAASNPRLRAVVEKALSVNMTRDAINRAIQRGAGGEDNDDLNEVTYEGYGVGGVAVLVETMTDNLNRTVPDVRHCFSKTNGNLGTNGSVSYLFTKRGEISFEDVSLEDKIMDVALEAGADDIEIEEDGILVITSPESFGDVQDALTAAGLKSDNAEVVMSPSTKAEITDIEQAKQIMKMIDMLEDLDDVQNVYTNVEFSEEVLAQLDA.

It belongs to the TACO1 family.

Its subcellular location is the cytoplasm. The chain is Probable transcriptional regulatory protein ACIAD2052 from Acinetobacter baylyi (strain ATCC 33305 / BD413 / ADP1).